The following is a 488-amino-acid chain: Cobyric acid synthase (488 aa).

Residues 250–438 form the GATase cobBQ-type domain; that stretch reads DITIAIIRLP…LHGIFDNGSW (189 aa). Residue C331 is the Nucleophile of the active site. Residue H430 is part of the active site.

It belongs to the CobB/CobQ family. CobQ subfamily.

The protein operates within cofactor biosynthesis; adenosylcobalamin biosynthesis. Functionally, catalyzes amidations at positions B, D, E, and G on adenosylcobyrinic A,C-diamide. NH(2) groups are provided by glutamine, and one molecule of ATP is hydrogenolyzed for each amidation. This Trichodesmium erythraeum (strain IMS101) protein is Cobyric acid synthase.